Reading from the N-terminus, the 417-residue chain is Phosphoglycerate kinase, cytosolic (417 aa).

(2R)-3-phosphoglycerate contacts are provided by valine 23, aspartate 24, phenylalanine 25, asparagine 26, arginine 39, serine 61, histidine 62, glycine 64, arginine 65, arginine 132, histidine 168, and arginine 169. Residues glycine 214 and alanine 215 each contribute to the ADP site. Glycine 214 is a binding site for CDP. 2 residues coordinate AMP: alanine 215 and lysine 216. Alanine 215 serves as a coordination point for ATP. Alanine 215 contributes to the Mg(2+) binding site. Residue lysine 216 participates in (2R)-3-phosphoglycerate binding. Residue aspartate 219 participates in CDP binding. Residue aspartate 219 coordinates Mg(2+). ADP-binding residues include lysine 220 and glycine 238. An AMP-binding site is contributed by lysine 220. ATP is bound at residue lysine 220. Glycine 238 provides a ligand contact to CDP. The AMP site is built by alanine 239 and alanine 311. Residues alanine 239 and alanine 311 each coordinate ATP. ADP contacts are provided by alanine 311 and asparagine 335. The CDP site is built by glycine 336 and phenylalanine 341. ADP is bound by residues phenylalanine 341, glutamate 342, aspartate 374, and threonine 375. Glutamate 342 is an AMP binding site. ATP-binding residues include glutamate 342, aspartate 374, and threonine 375. Aspartate 374 serves as a coordination point for Mg(2+).

The protein belongs to the phosphoglycerate kinase family. As to quaternary structure, monomer. Mg(2+) serves as cofactor.

The protein localises to the cytoplasm. The catalysed reaction is (2R)-3-phosphoglycerate + ATP = (2R)-3-phospho-glyceroyl phosphate + ADP. The protein operates within carbohydrate degradation; glycolysis; pyruvate from D-glyceraldehyde 3-phosphate: step 2/5. The chain is Phosphoglycerate kinase, cytosolic (PGKB) from Leishmania mexicana.